Reading from the N-terminus, the 549-residue chain is Glucose-6-phosphate isomerase (549 aa).

E355 functions as the Proton donor in the catalytic mechanism. Catalysis depends on residues H386 and K514.

The protein belongs to the GPI family.

It localises to the cytoplasm. It catalyses the reaction alpha-D-glucose 6-phosphate = beta-D-fructose 6-phosphate. It participates in carbohydrate biosynthesis; gluconeogenesis. It functions in the pathway carbohydrate degradation; glycolysis; D-glyceraldehyde 3-phosphate and glycerone phosphate from D-glucose: step 2/4. Catalyzes the reversible isomerization of glucose-6-phosphate to fructose-6-phosphate. In Klebsiella pneumoniae subsp. pneumoniae (strain ATCC 700721 / MGH 78578), this protein is Glucose-6-phosphate isomerase.